A 1062-amino-acid chain; its full sequence is 3-hydroxy-3-methylglutaryl-coenzyme A reductase 2 (1062 aa).

At 1-34 (MAPTNTKDSDTPGWLHRHGTSVLGSVARQACKQP) the chain is on the cytoplasmic side. A helical transmembrane segment spans residues 35-55 (IYTLVITALLATMTYTSLLEG). Topologically, residues 56-230 (SLYNANLTRL…SFVGLIKHAQ (175 aa)) are lumenal. N-linked (GlcNAc...) asparagine glycosylation is present at N61. The helical transmembrane segment at 231-251 (IIDIIIMLLAYLAMHLTFLSL) threads the bilayer. Residues 233–403 (DIIIMLLAYL…FTFYISVLCV (171 aa)) enclose the SSD domain. At 252–261 (FMSMRQLGSR) the chain is on the cytoplasmic side. A helical membrane pass occupies residues 262-282 (FWLAYSVLLSGFFSLFFGLKV). The Lumenal portion of the chain corresponds to 283–287 (TTSSG). A helical transmembrane segment spans residues 288-308 (VSTSMITLSECLPILVIIVGF). Topologically, residues 309-355 (EKPIRLTRAVLRAATESYLPAKPMARRSTPEAIEVAIMREGWRIVRD) are cytoplasmic. The chain crosses the membrane as a helical span at residues 356–375 (YAIEIAILAAGATSRVQGAL). The Lumenal portion of the chain corresponds to 376-377 (PQ). Residues 378–398 (FCFLAAWILLFDSLLLFTFYI) traverse the membrane as a helical segment. Topologically, residues 399–450 (SVLCVKLEITRIRKHVEPRRALEDDDISTGNQDFDSRVFGCKVKAANISRFK) are cytoplasmic. A helical transmembrane segment spans residues 451 to 471 (FLMVGGFVLFNVLQLSSLTYG). Over 472–564 (NVRVSDWMPY…GCVLAWLEDP (93 aa)) the chain is Lumenal. The N-linked (GlcNAc...) asparagine glycan is linked to N484. The helical transmembrane segment at 565–585 (VISKWVIAALFLSLVLNSYLM) threads the bilayer. Residues 586–1062 (KAARWNLRQS…NRSKVAAKTG (477 aa)) lie on the Cytoplasmic side of the membrane. Catalysis depends on E744, which acts as the Charge relay system. 750-756 (SASRGCK) is a CoA binding site. Residues 811–813 (SRF) and 838–846 (DAMGMNMIS) each bind NADP(+). The active-site Charge relay system is the K877. 906–908 (VLK) contacts CoA. D953 (charge relay system) is an active-site residue. CoA is bound at residue 1048 to 1049 (AH). Residue H1049 is the Proton donor of the active site. 1053–1054 (NR) provides a ligand contact to NADP(+).

Belongs to the HMG-CoA reductase family.

The protein localises to the endoplasmic reticulum membrane. It catalyses the reaction (R)-mevalonate + 2 NADP(+) + CoA = (3S)-3-hydroxy-3-methylglutaryl-CoA + 2 NADPH + 2 H(+). It participates in metabolic intermediate biosynthesis; (R)-mevalonate biosynthesis; (R)-mevalonate from acetyl-CoA: step 3/3. In terms of biological role, HMG-CoA reductase; part of the first module of ergosterol biosynthesis pathway that includes the early steps of the pathway, conserved across all eukaryotes, and which results in the formation of mevalonate from acetyl-coenzyme A (acetyl-CoA). Hmg1 and hmg2 catalyze the reduction of hydroxymethylglutaryl-CoA (HMG-CoA) to mevalonate. The first module starts with the action of the cytosolic acetyl-CoA acetyltransferase erg10B that catalyzes the formation of acetoacetyl-CoA. The hydroxymethylglutaryl-CoA synthases erg13A and erg13B then condense acetyl-CoA with acetoacetyl-CoA to form HMG-CoA. The rate-limiting step of the early module is the reduction to mevalonate by the 3-hydroxy-3-methylglutaryl-coenzyme A (HMG-CoA) reductases hmg1 and hmg2. Mevalonate is also a precursor for the extracellular siderophore triacetylfusarinine C (TAFC). The polypeptide is 3-hydroxy-3-methylglutaryl-coenzyme A reductase 2 (Aspergillus fumigatus (strain ATCC MYA-4609 / CBS 101355 / FGSC A1100 / Af293) (Neosartorya fumigata)).